Here is a 53-residue protein sequence, read N- to C-terminus: Bowman-Birk type proteinase inhibitor II-4 (53 aa).

4 disulfide bridges follow: cysteine 8–cysteine 23, cysteine 13–cysteine 21, cysteine 30–cysteine 37, and cysteine 34–cysteine 49.

Belongs to the Bowman-Birk serine protease inhibitor family.

The chain is Bowman-Birk type proteinase inhibitor II-4 from Triticum aestivum (Wheat).